Here is a 218-residue protein sequence, read N- to C-terminus: Guanylate kinase (218 aa).

The region spanning 5–188 (GNLFILSAPS…ALLDLTTIVN (184 aa)) is the Guanylate kinase-like domain. 12-19 (APSGAGKS) is a binding site for ATP.

This sequence belongs to the guanylate kinase family.

Its subcellular location is the cytoplasm. The enzyme catalyses GMP + ATP = GDP + ADP. Essential for recycling GMP and indirectly, cGMP. This Colwellia psychrerythraea (strain 34H / ATCC BAA-681) (Vibrio psychroerythus) protein is Guanylate kinase.